We begin with the raw amino-acid sequence, 72 residues long: Caerin-regulated peptide (72 aa).

Residues 1–22 (MAFLKKSLLLVLFLGLVSLSIC) form the signal peptide. The propeptide occupies 23–43 (DEEKRENEDEEEQEDDEQSEE). The tract at residues 24 to 46 (EEKRENEDEEEQEDDEQSEEKRG) is disordered. The span at 30-41 (EDEEEQEDDEQS) shows a compositional bias: acidic residues.

In terms of tissue distribution, expressed by the skin glands.

Its subcellular location is the secreted. Functionally, has antibacterial activity against Gram-positive bacterium M.luteus NCT C2665 and against Gram-negative bacterium E.coli K12D31. The polypeptide is Caerin-regulated peptide (Agalychnis callidryas (Red-eyed tree frog)).